A 105-amino-acid chain; its full sequence is Small ribosomal subunit protein uS10 (105 aa).

This sequence belongs to the universal ribosomal protein uS10 family. As to quaternary structure, part of the 30S ribosomal subunit.

Functionally, involved in the binding of tRNA to the ribosomes. The protein is Small ribosomal subunit protein uS10 of Cyanothece sp. (strain PCC 7425 / ATCC 29141).